The sequence spans 218 residues: Ribose-5-phosphate isomerase A (218 aa).

Substrate-binding positions include 28-31, 81-84, and 94-97; these read TGST, DGAD, and KGGG. Catalysis depends on E103, which acts as the Proton acceptor. Position 121 (K121) interacts with substrate.

This sequence belongs to the ribose 5-phosphate isomerase family. In terms of assembly, homodimer.

The enzyme catalyses aldehydo-D-ribose 5-phosphate = D-ribulose 5-phosphate. The protein operates within carbohydrate degradation; pentose phosphate pathway; D-ribose 5-phosphate from D-ribulose 5-phosphate (non-oxidative stage): step 1/1. Catalyzes the reversible conversion of ribose-5-phosphate to ribulose 5-phosphate. This Vibrio vulnificus (strain CMCP6) protein is Ribose-5-phosphate isomerase A.